Here is a 441-residue protein sequence, read N- to C-terminus: Ankyrin repeat and MYND domain-containing protein 2 (441 aa).

ANK repeat units follow at residues 45-74 (NGMT…DVNC), 79-108 (HGYT…ETDV), and 159-188 (KLAG…NPLL). Cysteine 320, cysteine 323, cysteine 332, cysteine 335, cysteine 341, cysteine 345, histidine 353, and cysteine 357 together coordinate Zn(2+). Residues 320–357 (CTTCGEKGASKRCSVCKMVIYCDQTCQKTHWFTHKKIC) form an MYND-type zinc finger. Residues 374-384 (EKRQEENHGKL) are compositionally biased toward basic and acidic residues. Residues 374–441 (EKRQEENHGK…APAGPQVSEE (68 aa)) are disordered.

In terms of assembly, interacts with the retinal-specific guanylyl cyclase GC1.

The protein resides in the cell projection. It is found in the cilium. Functionally, may be involved in the trafficking of signaling proteins to the cilia. In Homo sapiens (Human), this protein is Ankyrin repeat and MYND domain-containing protein 2 (ANKMY2).